The following is a 118-amino-acid chain: Probable small nuclear ribonucleoprotein Sm D2 (118 aa).

The region spanning 29 to 115 (LSILTNSVKN…VILVVKNPLA (87 aa)) is the Sm domain.

The protein belongs to the snRNP core protein family.

The protein localises to the nucleus. The protein resides in the cytoplasm. Its subcellular location is the cytosol. Its function is as follows. Plays a role in pre-mRNA splicing as a core component of the spliceosomal U1, U2, U4 and U5 small nuclear ribonucleoproteins (snRNPs), the building blocks of the spliceosome. In Caenorhabditis elegans, this protein is Probable small nuclear ribonucleoprotein Sm D2 (snr-4).